Here is a 794-residue protein sequence, read N- to C-terminus: Putative neurotrophin receptor LTRK 1 (794 aa).

An N-terminal signal peptide occupies residues 1–33 (MRGPRRFRLWTRANVLTVISILTSILSGAGCSP). The Extracellular segment spans residues 34–419 (LSQLPSDNPA…PTEDFGPQTQ (386 aa)). The segment at 36-102 (QLPSDNPAHV…DQVPGDASRN (67 aa)) is disordered. N64, N102, and N128 each carry an N-linked (GlcNAc...) asparagine glycan. 2 LRR repeats span residues 181–202 (CLKHLTIENCGLNNIQGIAFKT) and 205–226 (SLETINLRHNHLTEFPQELLRT). The LRRCT domain occupies 237-280 (NALTCSCTNLWLRSVDVAADRSEMTCSTRDGVSKMKMTQFKCEP). N288 and N374 each carry an N-linked (GlcNAc...) asparagine glycan. Residues 420–440 (VILPVVGVVILLISAVFIIYL) traverse the membrane as a helical segment. The Cytoplasmic segment spans residues 441-794 (CQRAKHRSHA…GDPVYIDIIA (354 aa)). A Protein kinase domain is found at 504–775 (ILLMRVIGEG…PQDRLTMKDI (272 aa)). ATP contacts are provided by residues 510-518 (IGEGAFGRV) and K538. The Proton acceptor role is filled by D647. A phosphotyrosine; by autocatalysis mark is found at Y673, Y677, Y678, and Y789.

Belongs to the protein kinase superfamily. Tyr protein kinase family. Insulin receptor subfamily. As to expression, expression is confined to the central nervous system and its associated endocrine tissues.

The protein resides in the membrane. It catalyses the reaction L-tyrosyl-[protein] + ATP = O-phospho-L-tyrosyl-[protein] + ADP + H(+). Functionally, may bind an endogenous invertebrate neurotrophin. Binds human NT-3, but not NGF or BDNF. In Lymnaea stagnalis (Great pond snail), this protein is Putative neurotrophin receptor LTRK 1.